The primary structure comprises 118 residues: Large ribosomal subunit protein bL20c (118 aa).

This sequence belongs to the bacterial ribosomal protein bL20 family.

It is found in the plastid. In terms of biological role, binds directly to 23S ribosomal RNA and is necessary for the in vitro assembly process of the 50S ribosomal subunit. It is not involved in the protein synthesizing functions of that subunit. This Aneura mirabilis (Parasitic liverwort) protein is Large ribosomal subunit protein bL20c.